Consider the following 216-residue polypeptide: Uracil phosphoribosyltransferase (216 aa).

Residues arginine 30, arginine 39, 73-76, and lysine 75 each bind GTP; that span reads ASKI. A 5-phospho-alpha-D-ribose 1-diphosphate-binding site is contributed by arginine 83. Lysine 100 serves as a coordination point for GTP. Arginine 108 is a 5-phospho-alpha-D-ribose 1-diphosphate binding site. Residue arginine 129 participates in GTP binding. 5-phospho-alpha-D-ribose 1-diphosphate is bound by residues aspartate 135 and 135-143; that span reads DPMLATGGT. Tyrosine 199 contributes to the D-ribose 5-phosphate binding site. Uracil-binding positions include isoleucine 200 and 205–207; that span reads GDF. Aspartate 206 serves as a coordination point for 5-phospho-alpha-D-ribose 1-diphosphate.

This sequence belongs to the UPRTase family. The cofactor is Mg(2+).

The catalysed reaction is UMP + diphosphate = 5-phospho-alpha-D-ribose 1-diphosphate + uracil. It functions in the pathway pyrimidine metabolism; UMP biosynthesis via salvage pathway; UMP from uracil: step 1/1. Allosterically activated by GTP. In terms of biological role, catalyzes the conversion of uracil and 5-phospho-alpha-D-ribose 1-diphosphate (PRPP) to UMP and diphosphate. The protein is Uracil phosphoribosyltransferase (uprt) of Dictyostelium discoideum (Social amoeba).